A 71-amino-acid chain; its full sequence is MKKNIAFLLASMFVFSIATNAYASTQSNKKDLCEHYRQIAKESCKKGFLGVRDGTAGACFGAQIMVAAKGC.

The N-terminal stretch at M1–A23 is a signal peptide. Disulfide bonds link C33–C71 and C44–C59.

It is found in the secreted. Its function is as follows. Toxin which activates the particulate form of guanylate cyclase and increases cyclic GMP levels within the host intestinal epithelial cells. The chain is Heat-stable enterotoxin II (stiI) from Escherichia coli.